A 391-amino-acid polypeptide reads, in one-letter code: Nuclear hormone receptor family member nhr-115 (391 aa).

Positions 5 to 77 form a DNA-binding region, nuclear receptor; it reads LFPCQICGQN…IGMDASKFQY (73 aa). The segment at 8–28 adopts an NR C4-type zinc-finger fold; sequence CQICGQNSHGTHFGIVSCRAC. The NR C4-type; atypical zinc-finger motif lies at 41-65; that stretch reads ARKGCLTNFKDKGSCFCKPCRLRKC. In terms of domain architecture, NR LBD spans 130–388; that stretch reads YLDHGCETPI…FSHPEMFDDS (259 aa).

Belongs to the nuclear hormone receptor family.

The protein localises to the nucleus. Functionally, orphan nuclear receptor. This is Nuclear hormone receptor family member nhr-115 (nhr-115) from Caenorhabditis elegans.